The sequence spans 553 residues: Vacuolar fusion protein MON1 homolog B (553 aa).

Residue Met1 is modified to N-acetylmethionine. 2 disordered regions span residues 1–111 (MEAG…DEDW) and 534–553 (STPPSTSADQAPNNGLFTGL). Basic and acidic residues predominate over residues 23-35 (FPREEAGDSERVH). The segment covering 52–72 (KDQPSSLLSPLPQTEAASSTC) has biased composition (polar residues). Ser57 carries the post-translational modification Phosphoserine. The segment covering 78–95 (AAASDSSPPGEPESNSEG) has biased composition (low complexity). The segment covering 96-108 (QGEDPDDGGDPSD) has biased composition (acidic residues). The segment covering 541 to 553 (ADQAPNNGLFTGL) has biased composition (polar residues).

It belongs to the MON1/SAND family. Interacts with CCNT2; down-regulates CCNT2-mediated activation of viral promoters during herpes simplex virus 1/HHV-1 infection. Found in a complex with RMC1, CCZ1 MON1A and MON1B.

This Mus musculus (Mouse) protein is Vacuolar fusion protein MON1 homolog B (Mon1b).